A 744-amino-acid chain; its full sequence is Adenosylcobalamin-dependent ribonucleoside-triphosphate reductase (744 aa).

An intrachain disulfide couples Cys-120 to Cys-424. An effector region-1 region spans residues 148–159 (SMPFSFLFDQLM). The tract at residues 169 to 318 (VDENINQIPK…ICNLIGKTVV (150 aa)) is effector region-2. Residues Cys-413 and Glu-415 contribute to the active site. The interval 570 to 631 (FHYSGYLIQR…SDNFASAGTV (62 aa)) is adenosylcobalamin-binding-1. The adenosylcobalamin-binding-2 stretch occupies residues 690–729 (LKQAPKEPISKEKYEKADNHITGNVEIVFEQTNEDQKGLE).

It belongs to the class II ribonucleoside-triphosphate reductase family. As to quaternary structure, monomer. It depends on adenosylcob(III)alamin as a cofactor.

The catalysed reaction is a 2'-deoxyribonucleoside 5'-triphosphate + [thioredoxin]-disulfide + H2O = a ribonucleoside 5'-triphosphate + [thioredoxin]-dithiol. Allosterically regulated by ATP and dNTP. The chain is Adenosylcobalamin-dependent ribonucleoside-triphosphate reductase (rtpR) from Lactobacillus gasseri (strain ATCC 33323 / DSM 20243 / BCRC 14619 / CIP 102991 / JCM 1131 / KCTC 3163 / NCIMB 11718 / NCTC 13722 / AM63).